The chain runs to 634 residues: GTP-binding protein 4 (634 aa).

Ala2 is modified (N-acetylalanine). N6-acetyllysine; alternate is present on Lys103. Residue Lys103 forms a Glycyl lysine isopeptide (Lys-Gly) (interchain with G-Cter in SUMO2); alternate linkage. Ser122 is modified (phosphoserine). One can recognise an OBG-type G domain in the interval 169–340 (RTLLLCGYPN…VKTEACDRLL (172 aa)). GTP-binding positions include 175–182 (GYPNVGKS), 221–225 (DTPGI), and 289–292 (NKCD). Residue Lys332 forms a Glycyl lysine isopeptide (Lys-Gly) (interchain with G-Cter in SUMO2) linkage. Phosphoserine occurs at positions 468, 470, and 472. The tract at residues 494–634 (KILQSKEKNK…KRKAGKKDRR (141 aa)) is disordered. Residue Lys534 forms a Glycyl lysine isopeptide (Lys-Gly) (interchain with G-Cter in SUMO2) linkage. Over residues 544-554 (RRSRSVTRKRK) the composition is skewed to basic residues. Ser558 carries the phosphoserine modification. The segment covering 560–572 (PPSSTARSRSCSR) has biased composition (low complexity). The span at 573 to 585 (TPRDVSGLRDVKM) shows a compositional bias: basic and acidic residues. The segment covering 586-604 (VKKAKTMMKKAQKKMNRLG) has biased composition (basic residues). Positions 605–618 (KKGEADRHVFDMKP) are enriched in basic and acidic residues. Basic residues predominate over residues 619 to 634 (KHLLSGKRKAGKKDRR).

It belongs to the TRAFAC class OBG-HflX-like GTPase superfamily. OBG GTPase family. NOG subfamily. In terms of assembly, associates with pre-60S ribosomal particles. Interacts with MINAS-60 (product of an alternative open reading frame of RBM10). As to expression, ubiquitous.

It localises to the nucleus. Its subcellular location is the nucleolus. Functionally, involved in the biogenesis of the 60S ribosomal subunit. Acts as TP53 repressor, preventing TP53 stabilization and cell cycle arrest. This chain is GTP-binding protein 4 (Gtpbp4), found in Mus musculus (Mouse).